Here is a 209-residue protein sequence, read N- to C-terminus: Thiamine-phosphate synthase (209 aa).

4-amino-2-methyl-5-(diphosphooxymethyl)pyrimidine-binding positions include 37 to 41 (QLREK) and asparagine 69. Positions 70 and 89 each coordinate Mg(2+). Serine 108 lines the 4-amino-2-methyl-5-(diphosphooxymethyl)pyrimidine pocket. 134–136 (TNT) serves as a coordination point for 2-[(2R,5Z)-2-carboxy-4-methylthiazol-5(2H)-ylidene]ethyl phosphate. Lysine 137 contacts 4-amino-2-methyl-5-(diphosphooxymethyl)pyrimidine. Residues glycine 164 and 184–185 (VS) each bind 2-[(2R,5Z)-2-carboxy-4-methylthiazol-5(2H)-ylidene]ethyl phosphate.

The protein belongs to the thiamine-phosphate synthase family. Mg(2+) is required as a cofactor.

It catalyses the reaction 2-[(2R,5Z)-2-carboxy-4-methylthiazol-5(2H)-ylidene]ethyl phosphate + 4-amino-2-methyl-5-(diphosphooxymethyl)pyrimidine + 2 H(+) = thiamine phosphate + CO2 + diphosphate. The enzyme catalyses 2-(2-carboxy-4-methylthiazol-5-yl)ethyl phosphate + 4-amino-2-methyl-5-(diphosphooxymethyl)pyrimidine + 2 H(+) = thiamine phosphate + CO2 + diphosphate. It carries out the reaction 4-methyl-5-(2-phosphooxyethyl)-thiazole + 4-amino-2-methyl-5-(diphosphooxymethyl)pyrimidine + H(+) = thiamine phosphate + diphosphate. It participates in cofactor biosynthesis; thiamine diphosphate biosynthesis; thiamine phosphate from 4-amino-2-methyl-5-diphosphomethylpyrimidine and 4-methyl-5-(2-phosphoethyl)-thiazole: step 1/1. Its function is as follows. Condenses 4-methyl-5-(beta-hydroxyethyl)thiazole monophosphate (THZ-P) and 2-methyl-4-amino-5-hydroxymethyl pyrimidine pyrophosphate (HMP-PP) to form thiamine monophosphate (TMP). In Methanobrevibacter smithii (strain ATCC 35061 / DSM 861 / OCM 144 / PS), this protein is Thiamine-phosphate synthase.